We begin with the raw amino-acid sequence, 892 residues long: NACHT, LRR and PYD domains-containing protein 6 (892 aa).

The Pyrin domain occupies 1–103; the sequence is MDQPEAPCSS…AAQLQERRLQ (103 aa). The segment at 158–181 is disordered; the sequence is APEEAMGPAEEPEPGRARRSDTHT. A compositionally biased stretch (basic and acidic residues) spans 170–181; that stretch reads EPGRARRSDTHT. The NACHT domain occupies 196–513; sequence LTVVLQGPAG…EFLAALSYLL (318 aa). ATP is bound at residue 202–209; it reads GPAGIGKT. Positions 352–356 are disordered; that stretch reads KDKKK. An LRR 1 repeat occupies 462-487; that stretch reads EKELEQLELRGSKVQTLFLSKKELPG. The interval 590-614 is disordered; sequence APEVTEGAKGLEDTEEPEEEEEGEE. Residues 602-614 show a composition bias toward acidic residues; it reads DTEEPEEEEEGEE. LRR repeat units follow at residues 727-747, 755-778, 811-834, and 845-868; these read LCHLSSLTLSHCKLPDAVCRD, APALTELGLLHNRLSEAGLRMLSE, SPALTTLDLSGCQLPAPMVTYLCA, and TLSLASVELSEQSLQELQAVKRAK.

It belongs to the NLRP family. Homomultimer; forms the NLRP6 inflammasome polymeric complex, a filament composed of homopolymers in response to pathogens and other damage-associated signals. The core of NLRP6 inflammasomes consists of a signal sensor component (NLRP6), an adapter (PYCARD/ASC), which recruits effector pro-inflammatory caspases (CASP1 and CASP4). Interacts (via pyrin domain) with PYCARD/ASC (via pyrin domain); interaction takes place following NLRP6 activation and formation of liquid-liquid phase separation (LLPS), initiating nucleation which greatly enhances further addition of soluble PYCARD/ASC molecules to the speck in a prion-like polymerization process. Clustered PYCARD/ASC nucleates the formation of CASP1 (or possibly CASP4) filaments through the interaction of their respective CARD domains, acting as a platform for CASP1 polymerization. CASP1 filament formation increases local enzyme concentration, resulting in trans-autocleavage and activation. Active CASP1 then processes IL1B and IL18 precursors, leading to the release of mature cytokines in the extracellular milieu and inflammatory response. Interacts with DHX15. In terms of processing, polyubiquitinated with 'Lys-63'-linked chains, promoting the interaction with PYCARD/ASC and formation of the NLRP6 inflammasome. Deubiquitination by CYLD decreases the interaction with PYCARD/ASC. Expressed in peripheral blood leukocytes, predominantly in granulocytes and, at lower levels, in CD4(+) and CD8(+) T-cells. Expressed in colonic myofibroblasts (at protein level).

The protein resides in the cytoplasm. The protein localises to the cytosol. It localises to the inflammasome. Its subcellular location is the cell membrane. It is found in the nucleus membrane. Acts as the sensor component of the NLRP6 inflammasome, which mediates inflammasome activation in response to various pathogen-associated signals, leading to maturation and secretion of IL1B and IL18. Inflammasomes are supramolecular complexes that assemble in the cytosol in response to pathogens and other damage-associated signals and play critical roles in innate immunity and inflammation. Acts as a recognition receptor (PRR): recognizes and binds specific pathogens and other damage-associated signals, such as lipoteichoic acid (LTA), a cell-wall component of Gram-positive bacteria, or double stranded RNA (dsRNA). May also recognize and bind lipopolysaccharide (LPS), a major component of the outer membrane of Gram-negative bacteria; however, LPS is probably not a major activator of the NLRP6 inflammasome. Following LTA- or dsRNA-binding, NLRP6 undergoes liquid-liquid phase separation (LLPS), enhancing multivalent interactions, an essential step for the formation of the NLRP6 inflammasome polymeric complex. The NLRP6 inflammasome acts by promoting recruitment of effector pro-inflammatory caspases (CASP1 and/or CASP4) that catalyze maturation and secretion of IL1B and IL18 in the extracellular milieu. The NLRP6 inflammasome plays a central role in the maintenance of epithelial integrity and host defense against microbial infections in the intestine. Required to restrict infection against Gram-positive bacteria by recognizing lipoteichoic acid (LTA), leading to recruitment of CASP4 and CASP1, and subsequent maturation and secretion of IL1B and IL18. Involved in intestinal antiviral innate immunity together with DHX15: recognizes and binds viral dsRNA to restrict infection by enteric viruses through the interferon pathway and GSDMD-dependent release of IL18. Required to prevent infection by the apicomplexan parasite Cryptosporidium in enterocytes by promoting GSDMD-dependent release of IL18. The NLRP6 inflammasome may also regulate the gut microbiota composition by acting as a sensor of microbiota-associated metabolites to form a PYCARD/ASC-dependent inflammasome for downstream IL18 release and secretion of antimicrobial peptides. Essential for gut mucosal self-renewal and proliferation. Regulate mucus secretion in an inflammasome- and autophagy-dependent manner to prevent invasion by enteric bacteria,. During systemic bacterial infections, the NLRP6 inflammasome negatively regulates neutrophil recruitment and neutrophil extracellular traps (NETs) formation. May promote peripheral nerve recovery following injury via an inflammasome-independent mechanism. This Homo sapiens (Human) protein is NACHT, LRR and PYD domains-containing protein 6.